The chain runs to 221 residues: CASP-like protein 2U10 (221 aa).

The interval 1 to 22 is disordered; it reads MDSSSKPMNGSAGGSPVGDERK. The Cytoplasmic segment spans residues 1 to 31; sequence MDSSSKPMNGSAGGSPVGDERKMGDHEHEFR. A helical membrane pass occupies residues 32–52; the sequence is ISIILLRSFLLVLVIISEALM. Topologically, residues 53–91 are extracellular; it reads VTDRETGSVPLPFFGLPRPVFVTKTAKYELVTGLKFYVD. Residues 92-112 form a helical membrane-spanning segment; the sequence is ALGVVIGYTVLHLLFNIGLVA. The Cytoplasmic segment spans residues 113-122; sequence TKGTVVDCKS. A helical transmembrane segment spans residues 123-143; that stretch reads VAWISFIADSMMGYLLLSSAA. Over 144–174 the chain is Extracellular; sequence VATEIGYLAEEGAPAVLWRKVCNAFGYFCTV. Residues 175 to 195 traverse the membrane as a helical segment; the sequence is YAISVVICFIAALVSFVVVGI. The Cytoplasmic portion of the chain corresponds to 196–221; that stretch reads SAYHLFRLYGIQQQAAREKEKLSAEM.

It belongs to the Casparian strip membrane proteins (CASP) family. In terms of assembly, homodimer and heterodimers.

It localises to the cell membrane. The sequence is that of CASP-like protein 2U10 from Selaginella moellendorffii (Spikemoss).